A 309-amino-acid chain; its full sequence is Metaxin-3 (309 aa).

A disordered region spans residues 274 to 309 (MDDNLRRSPQNRPQKLSTLKPVGGAENSHSSDLLSH). Composition is skewed to polar residues over residues 280–290 (RSPQNRPQKLS) and 300–309 (NSHSSDLLSH).

The protein belongs to the metaxin family. In terms of assembly, part of a large protein complex spanning both mitochondrial membranes termed the mitochondrial intermembrane space bridging (MIB) complex.

The protein resides in the mitochondrion. It localises to the mitochondrion outer membrane. Could function in transport of proteins into the mitochondrion. The chain is Metaxin-3 (mtx3) from Xenopus laevis (African clawed frog).